An 89-amino-acid chain; its full sequence is Cornifin-A (89 aa).

The tract at residues 1 to 29 (MNSQQQKQPCTPPPQPQQQQVKQPCQPPP) is disordered. 8 repeat units span residues 3–14 (SQQQKQPCTPPP), 18–29 (QQQVKQPCQPPP), 31–38 (EPCIPKTK), 39–46 (EPCHPKVP), 47–54 (EPCHPKVP), 55–62 (EPCQPKVP), 63–70 (EPCQPKVP), and 71–78 (EPCPSTVT). Residues 3–29 (SQQQKQPCTPPPQPQQQQVKQPCQPPP) form a 2 X 12 AA approximate repeats region. The interval 31–78 (EPCIPKTKEPCHPKVPEPCHPKVPEPCQPKVPEPCQPKVPEPCPSTVT) is 6 X 8 AA approximate tandem repeats. The segment at 68-89 (KVPEPCPSTVTPAPAQQKTKQK) is disordered. The span at 75–89 (STVTPAPAQQKTKQK) shows a compositional bias: polar residues.

The protein belongs to the cornifin (SPRR) family.

It localises to the cytoplasm. Functionally, cross-linked envelope protein of keratinocytes. It is a keratinocyte protein that first appears in the cell cytosol, but ultimately becomes cross-linked to membrane proteins by transglutaminase. All that results in the formation of an insoluble envelope beneath the plasma membrane. The polypeptide is Cornifin-A (SPRR1A) (Homo sapiens (Human)).